We begin with the raw amino-acid sequence, 309 residues long: MRLVFAGTPEPAVPSLRALIESANHEVAAVVTRPDAPAGRGRKLMRSPVGALADEHGIEVLTPAKASDPEFLARLRELEPECCPVVAYGALLRQTALDIPEHGWVNLHFSLLPAWRGAAPVQAAIKHGDQITGASTFRLVPELDAGPVYGVVTEEVRDTDTSGVLLERLSVSGAKLLVATLDGIADGTLRAEEQPADGVSYAPKVEVEDARVDFTAPARAVDRLVRSVTPDPGAWASFRDERLKLGPVSIVDEDLGLAPGEIRVERRRVLAGTGSAPVALGEVQAQGKKRMAATDWARGSRIEQGERLK.

110 to 113 lines the (6S)-5,6,7,8-tetrahydrofolate pocket; the sequence is SLLP. Positions 289 to 309 are disordered; sequence KRMAATDWARGSRIEQGERLK. Basic and acidic residues predominate over residues 298–309; sequence RGSRIEQGERLK.

It belongs to the Fmt family.

It catalyses the reaction L-methionyl-tRNA(fMet) + (6R)-10-formyltetrahydrofolate = N-formyl-L-methionyl-tRNA(fMet) + (6S)-5,6,7,8-tetrahydrofolate + H(+). In terms of biological role, attaches a formyl group to the free amino group of methionyl-tRNA(fMet). The formyl group appears to play a dual role in the initiator identity of N-formylmethionyl-tRNA by promoting its recognition by IF2 and preventing the misappropriation of this tRNA by the elongation apparatus. This is Methionyl-tRNA formyltransferase from Saccharopolyspora erythraea (strain ATCC 11635 / DSM 40517 / JCM 4748 / NBRC 13426 / NCIMB 8594 / NRRL 2338).